The sequence spans 392 residues: Enoyl-[acyl-carrier-protein] reductase [NADH] (392 aa).

Residues 48-53 (GCSTGY), 74-75 (FE), 111-112 (DA), and 139-140 (LA) each bind NAD(+). Tyr-225 is a substrate binding site. Tyr-235 acts as the Proton donor in catalysis. Residues Lys-244 and 273-275 (LVT) contribute to the NAD(+) site.

This sequence belongs to the TER reductase family. In terms of assembly, monomer.

It catalyses the reaction a 2,3-saturated acyl-[ACP] + NAD(+) = a (2E)-enoyl-[ACP] + NADH + H(+). The protein operates within lipid metabolism; fatty acid biosynthesis. Functionally, involved in the final reduction of the elongation cycle of fatty acid synthesis (FAS II). Catalyzes the reduction of a carbon-carbon double bond in an enoyl moiety that is covalently linked to an acyl carrier protein (ACP). The sequence is that of Enoyl-[acyl-carrier-protein] reductase [NADH] from Idiomarina loihiensis (strain ATCC BAA-735 / DSM 15497 / L2-TR).